The primary structure comprises 162 residues: Interleukin-2 (162 aa).

A signal peptide spans 1-20 (MYKIQLLSCIALTLALVANG). An O-linked (GalNAc...) threonine glycan is attached at T23. The N-linked (GlcNAc...) asparagine glycan is linked to N70. Residues C79 and C134 are joined by a disulfide bond.

The protein belongs to the IL-2 family.

It is found in the secreted. Functionally, cytokine produced by activated CD4-positive helper T-cells and to a lesser extend activated CD8-positive T-cells and natural killer (NK) cells that plays pivotal roles in the immune response and tolerance. Binds to a receptor complex composed of either the high-affinity trimeric IL-2R (IL2RA/CD25, IL2RB/CD122 and IL2RG/CD132) or the low-affinity dimeric IL-2R (IL2RB and IL2RG). Interaction with the receptor leads to oligomerization and conformation changes in the IL-2R subunits resulting in downstream signaling starting with phosphorylation of JAK1 and JAK3. In turn, JAK1 and JAK3 phosphorylate the receptor to form a docking site leading to the phosphorylation of several substrates including STAT5. This process leads to activation of several pathways including STAT, phosphoinositide-3-kinase/PI3K and mitogen-activated protein kinase/MAPK pathways. Functions as a T-cell growth factor and can increase NK-cell cytolytic activity as well. Promotes strong proliferation of activated B-cells and subsequently immunoglobulin production. Plays a pivotal role in regulating the adaptive immune system by controlling the survival and proliferation of regulatory T-cells, which are required for the maintenance of immune tolerance. Moreover, participates in the differentiation and homeostasis of effector T-cell subsets, including Th1, Th2, Th17 as well as memory CD8-positive T-cells. The sequence is that of Interleukin-2 (IL2) from Cervus elaphus (Red deer).